Reading from the N-terminus, the 128-residue chain is Aspartate 1-decarboxylase (128 aa).

Ser-25 serves as the catalytic Schiff-base intermediate with substrate; via pyruvic acid. Pyruvic acid (Ser) is present on Ser-25. Residue Thr-57 coordinates substrate. Tyr-58 serves as the catalytic Proton donor. Residue 73–75 (GSA) participates in substrate binding.

Belongs to the PanD family. As to quaternary structure, heterooctamer of four alpha and four beta subunits. The cofactor is pyruvate. Post-translationally, is synthesized initially as an inactive proenzyme, which is activated by self-cleavage at a specific serine bond to produce a beta-subunit with a hydroxyl group at its C-terminus and an alpha-subunit with a pyruvoyl group at its N-terminus.

It is found in the cytoplasm. The catalysed reaction is L-aspartate + H(+) = beta-alanine + CO2. Its pathway is cofactor biosynthesis; (R)-pantothenate biosynthesis; beta-alanine from L-aspartate: step 1/1. Its function is as follows. Catalyzes the pyruvoyl-dependent decarboxylation of aspartate to produce beta-alanine. The sequence is that of Aspartate 1-decarboxylase from Burkholderia cenocepacia (strain HI2424).